The following is a 257-amino-acid chain: Enterotoxin type E (257 aa).

The first 27 residues, 1 to 27 (MKKTAFILLLFIALTLTTSPLVNGSEK), serve as a signal peptide directing secretion. C120 and C130 are oxidised to a cystine. Zn(2+) contacts are provided by H211, H249, and D251.

It belongs to the staphylococcal/streptococcal toxin family. As to quaternary structure, interacts with host MHC class II molecules composed of alpha/HLA-DRA and beta/HLA-DRB1 chains. Interacts with host T-cell receptor beta variable TRBV7-9. Zn(2+) serves as cofactor.

The protein localises to the secreted. In terms of biological role, staphylococcal enterotoxin that activates the host immune system by binding as unprocessed molecules to major histocompatibility (MHC) complex class II and T-cell receptor (TCR) molecules. In turn, this ternary complex activates a large number of T-lymphocytes initiating a systemic release of pro-inflammatory cytokines. Also causes the intoxication staphylococcal food poisoning syndrome. The polypeptide is Enterotoxin type E (entE) (Staphylococcus aureus).